A 477-amino-acid polypeptide reads, in one-letter code: Ubiquinone biosynthesis monooxygenase COQ6, mitochondrial (477 aa).

Residues 1 to 25 (MLGVLRIQGALASAGQARLLSVRLL) constitute a mitochondrion transit peptide.

The protein belongs to the UbiH/COQ6 family. In terms of assembly, component of a multi-subunit COQ enzyme complex. FAD serves as cofactor.

Its subcellular location is the mitochondrion inner membrane. The enzyme catalyses a 4-hydroxy-3-(all-trans-polyprenyl)benzoate + 2 reduced [2Fe-2S]-[ferredoxin] + O2 + 2 H(+) = a 3,4-dihydroxy-5-(all-trans-polyprenyl)benzoate + 2 oxidized [2Fe-2S]-[ferredoxin] + H2O. It catalyses the reaction a 2-methoxy-6-(all-trans-polyprenyl)phenol + 2 reduced [2Fe-2S]-[ferredoxin] + O2 + 2 H(+) = a 2-methoxy-6-(all-trans-polyprenyl)benzene-1,4-diol + 2 oxidized [2Fe-2S]-[ferredoxin] + H2O. Its pathway is cofactor biosynthesis; ubiquinone biosynthesis. FAD-dependent monooxygenase required for two non-consecutive steps during ubiquinone biosynthesis. Required for the C5-ring hydroxylation during ubiquinone biosynthesis by catalyzing the hydroxylation of 4-hydroxy-3-(all-trans-polyprenyl)benzoic acid to 3,4-dihydroxy-5-(all-trans-polyprenyl)benzoic acid. Also acts downstream of coq4, for the C1-hydroxylation during ubiquinone biosynthesis by catalyzing the hydroxylation of 2-methoxy-6-(all-trans-polyprenyl)phenol to 2-methoxy-6-(all-trans-polyprenyl)benzene-1,4-diol. The electrons required for the hydroxylation reaction are funneled indirectly to Coq6 from NADPH via a ferredoxin/ferredoxin reductase system. The sequence is that of Ubiquinone biosynthesis monooxygenase COQ6, mitochondrial from Drosophila melanogaster (Fruit fly).